Reading from the N-terminus, the 208-residue chain is Small ribosomal subunit protein uS4A (208 aa).

Positions 98-161 constitute an S4 RNA-binding domain; it reads LRLDNVVFRM…RKVLRISEAL (64 aa).

The protein belongs to the universal ribosomal protein uS4 family. Part of the 30S ribosomal subunit. Contacts protein S5. The interaction surface between S4 and S5 is involved in control of translational fidelity.

One of the primary rRNA binding proteins, it binds directly to 16S rRNA where it nucleates assembly of the body of the 30S subunit. Functionally, with S5 and S12 plays an important role in translational accuracy. This is Small ribosomal subunit protein uS4A from Myxococcus xanthus (strain DK1622).